Consider the following 433-residue polypeptide: Enolase (433 aa).

Gln166 is a (2R)-2-phosphoglycerate binding site. Glu208 acts as the Proton donor in catalysis. Asp245, Glu289, and Asp316 together coordinate Mg(2+). Lys341, Arg370, Ser371, and Lys392 together coordinate (2R)-2-phosphoglycerate. Lys341 acts as the Proton acceptor in catalysis.

It belongs to the enolase family. Mg(2+) is required as a cofactor.

It localises to the cytoplasm. Its subcellular location is the secreted. The protein localises to the cell surface. The enzyme catalyses (2R)-2-phosphoglycerate = phosphoenolpyruvate + H2O. Its pathway is carbohydrate degradation; glycolysis; pyruvate from D-glyceraldehyde 3-phosphate: step 4/5. Functionally, catalyzes the reversible conversion of 2-phosphoglycerate (2-PG) into phosphoenolpyruvate (PEP). It is essential for the degradation of carbohydrates via glycolysis. This Acetivibrio thermocellus (strain ATCC 27405 / DSM 1237 / JCM 9322 / NBRC 103400 / NCIMB 10682 / NRRL B-4536 / VPI 7372) (Clostridium thermocellum) protein is Enolase.